A 609-amino-acid polypeptide reads, in one-letter code: PTS system beta-glucoside-specific EIIBCA component (609 aa).

Residues 1 to 86 (MDYDKLSKDI…VRHSNLSDEK (86 aa)) enclose the PTS EIIB type-1 domain. The active-site Phosphocysteine intermediate; for EIIB activity is the cysteine 26. The PTS EIIC type-1 domain maps to 103-459 (DVISGVFTPI…GSQQPAVHEG (357 aa)). Transmembrane regions (helical) follow at residues 112 to 132 (ILPAIAGAGMIKGLVALAVTF), 141 to 161 (VHVILTAVGDGAFYFLPLLLA), 174 to 194 (VAAAIAAAILHPDLTALLGAG), 202 to 222 (LPVTAATYSSTVIPILLSIWI), 246 to 266 (FTLLIVVPLTLITVGPLGAIL), 281 to 301 (AGLVAMILLAGTFSLIIMTGM), 321 to 341 (LLPAMFLANMGQAGASFAVFL), 351 to 371 (LALTTSITALMGITEPAMYGV), 379 to 399 (FAAALIGGAAGGAFYGMTGVA), and 412 to 432 (IPVFIGPTFIYAMIGLVIAFA). Residues 480–584 (DGVFSAGVMG…DVITPVIVTN (105 aa)) form the PTS EIIA type-1 domain. Histidine 532 serves as the catalytic Tele-phosphohistidine intermediate; for EIIA activity.

Its subcellular location is the cell membrane. Its function is as follows. The phosphoenolpyruvate-dependent sugar phosphotransferase system (sugar PTS), a major carbohydrate active -transport system, catalyzes the phosphorylation of incoming sugar substrates concomitantly with their translocation across the cell membrane. This system is involved in beta-glucoside transport. This chain is PTS system beta-glucoside-specific EIIBCA component (bglP), found in Bacillus subtilis (strain 168).